A 330-amino-acid chain; its full sequence is Phosphate acyltransferase (330 aa).

This sequence belongs to the PlsX family. As to quaternary structure, homodimer. Probably interacts with PlsY.

Its subcellular location is the cytoplasm. It carries out the reaction a fatty acyl-[ACP] + phosphate = an acyl phosphate + holo-[ACP]. It functions in the pathway lipid metabolism; phospholipid metabolism. In terms of biological role, catalyzes the reversible formation of acyl-phosphate (acyl-PO(4)) from acyl-[acyl-carrier-protein] (acyl-ACP). This enzyme utilizes acyl-ACP as fatty acyl donor, but not acyl-CoA. This chain is Phosphate acyltransferase, found in Streptococcus agalactiae serotype Ia (strain ATCC 27591 / A909 / CDC SS700).